Consider the following 372-residue polypeptide: MDKLRVLYDEFVTISKDNLERETGLSASDVDMDFDLNIFMTLVPVLEKKVCVITPTIEDDKIVTMMKYCSYQSFSFWFLKSGAVVKSVYNKLDDAEKEKFVATFKDMLLNVQTLISLNSMYTRLRQDTEDIVSDSKKIMEIVSHLRASTTENAAYQVLQQNNSFIISTLNKILSDENYLLKIIAVFDSKLISEKETLNEYKQLYTISSESLVYGIRCVSNLDISSVQLSNNKYVLFVKKMLPKIILFQNNDINAQQFANVISKIYTLIYRQLTSNVDVGCLLTDTIESTKTKISVEKFKQTGINNVQSLIKFISDNKKEYKTIISEEYLSKEDRIITILQNIVNEHDIKYDNNLLNMRDLIVTFRERYSYKF.

This sequence belongs to the orthopoxvirus OPG132 family.

It localises to the host cytoplasm. It is found in the virion. In terms of biological role, lipid-bound viral membrane assembly protein that plays an essential role in immature virion (IV) to mature virion (MV) transition. Functions in both crescent-shaped viral membranes formation and its enclosure to form immature virions. In addition, participates in targeting mature virion proteins to sites of virion assembly to ensure their correct localization. The polypeptide is Virion morphogenesis protein OPG132 (OPG132) (Homo sapiens (Human)).